We begin with the raw amino-acid sequence, 608 residues long: Phosphogluconate dehydratase (608 aa).

2 residues coordinate [4Fe-4S] cluster: Cys154 and Cys221.

Belongs to the IlvD/Edd family. Requires [4Fe-4S] cluster as cofactor.

It catalyses the reaction 6-phospho-D-gluconate = 2-dehydro-3-deoxy-6-phospho-D-gluconate + H2O. The protein operates within carbohydrate metabolism; Entner-Doudoroff pathway. Functionally, catalyzes the dehydration of 6-phospho-D-gluconate to 2-dehydro-3-deoxy-6-phospho-D-gluconate. This Helicobacter pylori (strain ATCC 700392 / 26695) (Campylobacter pylori) protein is Phosphogluconate dehydratase.